The following is a 356-amino-acid chain: Non-functional pseudokinase ZRK15 (356 aa).

A Protein kinase domain is found at 62–356; it reads NRVSELFDEI…SSSSCGETSL (295 aa). ATP-binding positions include 68–76 and lysine 94; that span reads FDEIPYDWY.

The protein belongs to the protein kinase superfamily. Ser/Thr protein kinase family. ZRK subfamily. In terms of assembly, interacts with RPP13L4/ZAR1.

This chain is Non-functional pseudokinase ZRK15, found in Arabidopsis thaliana (Mouse-ear cress).